A 184-amino-acid chain; its full sequence is Vacuolar protein sorting-associated protein 68 (184 aa).

At Met-1 the chain carries N-acetylmethionine. Ser-8 is modified (phosphoserine). A helical transmembrane segment spans residues 26–46; the sequence is GVYLSGALYALGFWIFLDAVL. The N-linked (GlcNAc...) asparagine glycan is linked to Asn-52. Helical transmembrane passes span 56 to 76, 115 to 135, and 150 to 170; these read VHVT…TLIV, LFFG…VLII, and MGVN…VLWI.

Belongs to the UPF0220 family.

It is found in the vacuole membrane. Its subcellular location is the mitochondrion. Its function is as follows. Involved in vacuolar protein sorting. This is Vacuolar protein sorting-associated protein 68 (VPS68) from Saccharomyces cerevisiae (strain ATCC 204508 / S288c) (Baker's yeast).